A 467-amino-acid chain; its full sequence is Asparagine--tRNA ligase (467 aa).

The protein belongs to the class-II aminoacyl-tRNA synthetase family. Homodimer.

It localises to the cytoplasm. The enzyme catalyses tRNA(Asn) + L-asparagine + ATP = L-asparaginyl-tRNA(Asn) + AMP + diphosphate + H(+). The protein is Asparagine--tRNA ligase of Baumannia cicadellinicola subsp. Homalodisca coagulata.